A 56-amino-acid chain; its full sequence is Ovomucoid (56 aa).

The Kazal-like domain occupies 6–56 (VDCSEYPKPACTLEHRPLCGSDNKTYGNKCNFCNAVVESNGTLTLSHFGKC). Intrachain disulfides connect C8–C38, C16–C35, and C24–C56. A glycan (N-linked (GlcNAc...) asparagine) is linked at N45.

Its subcellular location is the secreted. The polypeptide is Ovomucoid (Pavo cristatus (Indian peafowl)).